Reading from the N-terminus, the 138-residue chain is Ribosome-binding factor A (138 aa).

Belongs to the RbfA family. In terms of assembly, monomer. Binds 30S ribosomal subunits, but not 50S ribosomal subunits or 70S ribosomes.

Its subcellular location is the cytoplasm. One of several proteins that assist in the late maturation steps of the functional core of the 30S ribosomal subunit. Associates with free 30S ribosomal subunits (but not with 30S subunits that are part of 70S ribosomes or polysomes). Required for efficient processing of 16S rRNA. May interact with the 5'-terminal helix region of 16S rRNA. The sequence is that of Ribosome-binding factor A from Paracoccus denitrificans (strain Pd 1222).